A 454-amino-acid chain; its full sequence is UDP-N-acetylmuramate--L-alanine ligase (454 aa).

113–119 (GSHGKTT) contributes to the ATP binding site.

This sequence belongs to the MurCDEF family.

The protein localises to the cytoplasm. It catalyses the reaction UDP-N-acetyl-alpha-D-muramate + L-alanine + ATP = UDP-N-acetyl-alpha-D-muramoyl-L-alanine + ADP + phosphate + H(+). The protein operates within cell wall biogenesis; peptidoglycan biosynthesis. In terms of biological role, cell wall formation. The chain is UDP-N-acetylmuramate--L-alanine ligase from Sulfurihydrogenibium sp. (strain YO3AOP1).